A 210-amino-acid chain; its full sequence is Dynein regulatory complex protein 12 (210 aa).

Positions 1 to 23 (MPPKNKEKGKKSGAQKKKKNWGA) are disordered. The span at 7-20 (EKGKKSGAQKKKKN) shows a compositional bias: basic residues. Residues 49–161 (RDEARRAKAS…EAKYEEILHD (113 aa)) are a coiled coil. The tract at residues 188–210 (HKEQQRQFGLTPPGSLRPPAPSL) is disordered.

The protein belongs to the DRC12 family. As to quaternary structure, component of the nexin-dynein regulatory complex (N-DRC).

The protein resides in the cytoplasm. Its subcellular location is the cytoskeleton. It is found in the flagellum axoneme. Its function is as follows. Component of the nexin-dynein regulatory complex (N-DRC), a key regulator of ciliary/flagellar motility which maintains the alignment and integrity of the distal axoneme and regulates microtubule sliding in motile axonemes. This chain is Dynein regulatory complex protein 12, found in Homo sapiens (Human).